A 224-amino-acid polypeptide reads, in one-letter code: Envelope glycoprotein L (224 aa).

Residues 1–16 (MGFVCLFGLVVMGAWG) form the signal peptide. Residues 20–161 (GSQATEYVLR…FDYSRTRRCV (142 aa)) form an interaction with gH region. Positions 23–201 (ATEYVLRSVI…LATQPPVLAL (179 aa)) constitute a gL alphaherpesvirus-type domain. Cystine bridges form between Cys44/Cys76 and Cys149/Cys160. The segment at 168–224 (PANTTSTWEPPVSSDDEASSQSKPLATQPPVLALSNAPPRRVSPTRGRRRHTRLRRN) is disordered. Residues 213 to 224 (RGRRRHTRLRRN) show a composition bias toward basic residues.

This sequence belongs to the herpesviridae glycoprotein L (gL) family. Alphaherpesvirinae gL subfamily. Interacts with glycoprotein H (gH); this interaction is necessary for the correct processing and cell surface expression of gH. The heterodimer gH/gL seems to interact with gB trimers during fusion.

The protein resides in the virion membrane. The protein localises to the host cell membrane. It localises to the host Golgi apparatus. It is found in the host trans-Golgi network. Functionally, the heterodimer glycoprotein H-glycoprotein L is required for the fusion of viral and plasma membranes leading to virus entry into the host cell. Acts as a functional inhibitor of gH and maintains gH in an inhibited form. Upon binding to host integrins, gL dissociates from gH leading to activation of the viral fusion glycoproteins gB and gH. The sequence is that of Envelope glycoprotein L from Homo sapiens (Human).